A 293-amino-acid chain; its full sequence is PHD finger protein 11A (293 aa).

The C2HC pre-PHD-type zinc-finger motif lies at 25-61 (KRTCALCPEGHEWSQIYFSPSANIVAHENCLLYSSGL). Residues 91 to 143 (LKCSFCKNKGATMGYDLQSCTKNYHLSCAMEDHAILQVDEDHGTYKLFCQKHA) form a PHD-type; degenerate zinc finger. Positions 262–293 (SSSTSGSLLPPEDHQVRCQESPEVQAGSGDSL) are disordered.

It localises to the nucleus. The sequence is that of PHD finger protein 11A (Phf11a) from Mus musculus (Mouse).